Reading from the N-terminus, the 231-residue chain is Cytidylate kinase (231 aa).

Position 18–26 (18–26 (GPSGTGKSS)) interacts with ATP.

This sequence belongs to the cytidylate kinase family. Type 1 subfamily.

The protein localises to the cytoplasm. The catalysed reaction is CMP + ATP = CDP + ADP. It carries out the reaction dCMP + ATP = dCDP + ADP. The sequence is that of Cytidylate kinase from Streptomyces coelicolor (strain ATCC BAA-471 / A3(2) / M145).